The following is a 668-amino-acid chain: Fructose-1,6-bisphosphatase class 3 (668 aa).

The protein belongs to the FBPase class 3 family. The cofactor is Mn(2+).

It catalyses the reaction beta-D-fructose 1,6-bisphosphate + H2O = beta-D-fructose 6-phosphate + phosphate. It functions in the pathway carbohydrate biosynthesis; gluconeogenesis. In Clostridium botulinum (strain Loch Maree / Type A3), this protein is Fructose-1,6-bisphosphatase class 3.